We begin with the raw amino-acid sequence, 201 residues long: Small ribosomal subunit protein uS4c (201 aa).

One can recognise an S4 RNA-binding domain in the interval 89–152 (MRLDNILFRL…NSRTLVQNLI (64 aa)).

The protein belongs to the universal ribosomal protein uS4 family. In terms of assembly, part of the 30S ribosomal subunit. Contacts protein S5. The interaction surface between S4 and S5 is involved in control of translational fidelity.

It is found in the plastid. Its subcellular location is the chloroplast. Functionally, one of the primary rRNA binding proteins, it binds directly to 16S rRNA where it nucleates assembly of the body of the 30S subunit. Its function is as follows. With S5 and S12 plays an important role in translational accuracy. This Crucihimalaya wallichii (Rock-cress) protein is Small ribosomal subunit protein uS4c (rps4).